Reading from the N-terminus, the 334-residue chain is Leukocyte cell-derived chemotaxin 1 (334 aa).

A helical membrane pass occupies residues 46 to 66; it reads VVLISGAVLLLFGAIGAFYFW. Residues 105–201 enclose the BRICHOS domain; it reads GSGAEEAIEV…LCGDLPIFWL (97 aa). A disulfide bridge connects residues cysteine 132 and cysteine 193. Positions 211–214 are excised as a propeptide; that stretch reads RERR. Positions 212–270 are disordered; the sequence is ERREVVRNSAPSTTRRPHSEPRGNAGPGRLSNGTRPNVQDDAEPFNPDNPYHQQEGESM. A glycan (N-linked (GlcNAc...) asparagine) is linked at asparagine 243. Cystine bridges form between cysteine 282-cysteine 286, cysteine 283-cysteine 323, cysteine 293-cysteine 317, and cysteine 297-cysteine 313.

It belongs to the chondromodulin-1 family. In terms of processing, after cleavage, the post-translationally modified ChM-I is secreted as a glycoprotein. As to expression, detected in the four cardiac valves, valvular interstitial cells and extracellular matrix (at protein level).

The protein localises to the secreted. It localises to the extracellular space. The protein resides in the extracellular matrix. It is found in the endomembrane system. In terms of biological role, bifunctional growth regulator that stimulates the growth of cultured chondrocytes in the presence of basic fibroblast growth factor (FGF) but inhibits the growth of cultured vascular endothelial cells. May contribute to the rapid growth of cartilage and vascular invasion prior to the replacement of cartilage by bone during endochondral bone development. Inhibits in vitro tube formation and mobilization of endothelial cells. Plays a role as antiangiogenic factor in cardiac valves to suppress neovascularization. The chain is Leukocyte cell-derived chemotaxin 1 from Mus musculus (Mouse).